Here is a 1371-residue protein sequence, read N- to C-terminus: Probable serine/threonine-protein kinase DDB_G0293292 (1371 aa).

2 consecutive Protein kinase domains span residues 9–269 (NKIL…HPNT) and 1131–1371 (FKEV…QPTL). ATP-binding positions include 15–23 (IDDGNTKRK) and K39. D143 (proton acceptor) is an active-site residue.

Belongs to the protein kinase superfamily. Ser/Thr protein kinase family.

The catalysed reaction is L-seryl-[protein] + ATP = O-phospho-L-seryl-[protein] + ADP + H(+). It catalyses the reaction L-threonyl-[protein] + ATP = O-phospho-L-threonyl-[protein] + ADP + H(+). This Dictyostelium discoideum (Social amoeba) protein is Probable serine/threonine-protein kinase DDB_G0293292.